Consider the following 333-residue polypeptide: Glyceraldehyde-3-phosphate dehydrogenase 1 (333 aa).

Residues 12 to 13 (RI), D35, and R79 each bind NAD(+). Residues 152–154 (SCT), T183, R198, 211–212 (SG), and R234 contribute to the D-glyceraldehyde 3-phosphate site. The active-site Nucleophile is C153. N314 lines the NAD(+) pocket.

This sequence belongs to the glyceraldehyde-3-phosphate dehydrogenase family. In terms of assembly, homotetramer.

Its subcellular location is the cytoplasm. The enzyme catalyses D-glyceraldehyde 3-phosphate + phosphate + NAD(+) = (2R)-3-phospho-glyceroyl phosphate + NADH + H(+). Its pathway is carbohydrate degradation; glycolysis; pyruvate from D-glyceraldehyde 3-phosphate: step 1/5. With respect to regulation, resistant to pentalenolactone (PL). Catalyzes the oxidative phosphorylation of glyceraldehyde 3-phosphate (G3P) to 1,3-bisphosphoglycerate (BPG) using the cofactor NAD. The first reaction step involves the formation of a hemiacetal intermediate between G3P and a cysteine residue, and this hemiacetal intermediate is then oxidized to a thioester, with concomitant reduction of NAD to NADH. The reduced NADH is then exchanged with the second NAD, and the thioester is attacked by a nucleophilic inorganic phosphate to produce BPG. The chain is Glyceraldehyde-3-phosphate dehydrogenase 1 (gap1) from Streptomyces arenae.